A 237-amino-acid polypeptide reads, in one-letter code: Ribonuclease 3 (237 aa).

One can recognise an RNase III domain in the interval 7–135; sequence IKEVEAKLKF…ILGAVYLDGG (129 aa). Glu-48 is a binding site for Mg(2+). Asp-52 is an active-site residue. Residues Asn-121 and Glu-124 each coordinate Mg(2+). The active site involves Glu-124. A DRBM domain is found at 160-229; sequence NPKNRLQQLT…AQEALDANDY (70 aa).

The protein belongs to the ribonuclease III family. In terms of assembly, homodimer. Mg(2+) serves as cofactor.

Its subcellular location is the cytoplasm. It carries out the reaction Endonucleolytic cleavage to 5'-phosphomonoester.. Functionally, digests double-stranded RNA. Involved in the processing of primary rRNA transcript to yield the immediate precursors to the large and small rRNAs (23S and 16S). Processes some mRNAs, and tRNAs when they are encoded in the rRNA operon. Processes pre-crRNA and tracrRNA of type II CRISPR loci if present in the organism. This chain is Ribonuclease 3, found in Chlamydia felis (strain Fe/C-56) (Chlamydophila felis).